The primary structure comprises 445 residues: Glutamyl-tRNA reductase (445 aa).

Substrate contacts are provided by residues T49 to R52, S109, E114 to Q116, and Q120. C50 functions as the Nucleophile in the catalytic mechanism. G189–S194 is a binding site for NADP(+).

It belongs to the glutamyl-tRNA reductase family. Homodimer.

It carries out the reaction (S)-4-amino-5-oxopentanoate + tRNA(Glu) + NADP(+) = L-glutamyl-tRNA(Glu) + NADPH + H(+). Its pathway is porphyrin-containing compound metabolism; protoporphyrin-IX biosynthesis; 5-aminolevulinate from L-glutamyl-tRNA(Glu): step 1/2. Functionally, catalyzes the NADPH-dependent reduction of glutamyl-tRNA(Glu) to glutamate 1-semialdehyde (GSA). This chain is Glutamyl-tRNA reductase, found in Staphylococcus carnosus (strain TM300).